Consider the following 82-residue polypeptide: Small ribosomal subunit protein bS16 (82 aa).

It belongs to the bacterial ribosomal protein bS16 family.

The protein is Small ribosomal subunit protein bS16 of Aeromonas salmonicida (strain A449).